Here is a 233-residue protein sequence, read N- to C-terminus: Enolase-phosphatase E1 (233 aa).

The protein belongs to the HAD-like hydrolase superfamily. MasA/MtnC family. In terms of assembly, monomer. The cofactor is Mg(2+).

The catalysed reaction is 5-methylsulfanyl-2,3-dioxopentyl phosphate + H2O = 1,2-dihydroxy-5-(methylsulfanyl)pent-1-en-3-one + phosphate. It functions in the pathway amino-acid biosynthesis; L-methionine biosynthesis via salvage pathway; L-methionine from S-methyl-5-thio-alpha-D-ribose 1-phosphate: step 3/6. It participates in amino-acid biosynthesis; L-methionine biosynthesis via salvage pathway; L-methionine from S-methyl-5-thio-alpha-D-ribose 1-phosphate: step 4/6. Functionally, bifunctional enzyme that catalyzes the enolization of 2,3-diketo-5-methylthiopentyl-1-phosphate (DK-MTP-1-P) into the intermediate 2-hydroxy-3-keto-5-methylthiopentenyl-1-phosphate (HK-MTPenyl-1-P), which is then dephosphorylated to form the acireductone 1,2-dihydroxy-3-keto-5-methylthiopentene (DHK-MTPene). The sequence is that of Enolase-phosphatase E1 from Hahella chejuensis (strain KCTC 2396).